We begin with the raw amino-acid sequence, 809 residues long: Mediator of RNA polymerase II transcription subunit 15 (809 aa).

3 disordered regions span residues A115 to Q137, Q183 to Q211, and G413 to S549. Positions V119–A128 are enriched in gly residues. A compositionally biased stretch (low complexity) spans Q446–Q467. Residues S468 to S484 show a composition bias toward pro residues. Composition is skewed to low complexity over residues Q485–P502 and Q510–S520. Residues T533–S549 show a composition bias toward polar residues.

This sequence belongs to the Mediator complex subunit 15 family. As to quaternary structure, component of the Mediator complex. Interacts with srebf1 and srebf2. Interacts with smad2, smad3 and smad4.

It localises to the cytoplasm. The protein resides in the nucleus. Functionally, component of the Mediator complex, a coactivator involved in the regulated transcription of nearly all RNA polymerase II-dependent genes. Mediator functions as a bridge to convey information from gene-specific regulatory proteins to the basal RNA polymerase II transcription machinery. Mediator is recruited to promoters by direct interactions with regulatory proteins and serves as a scaffold for the assembly of a functional preinitiation complex with RNA polymerase II and the general transcription factors. Required for cholesterol-dependent gene regulation. Positively regulates the Nodal signaling pathway. The protein is Mediator of RNA polymerase II transcription subunit 15 (med15) of Danio rerio (Zebrafish).